Consider the following 473-residue polypeptide: Glutamyl-tRNA reductase (473 aa).

Substrate contacts are provided by residues 49-52, Ser-109, 114-116, and Gln-120; these read TCNR and ESQ. Cys-50 functions as the Nucleophile in the catalytic mechanism. The tract at residues 196 to 215 is disordered; that stretch reads LDGGGVAAEGPRHAVTPEPP. NADP(+) is bound at residue 226 to 231; that stretch reads GAGAVG.

Belongs to the glutamyl-tRNA reductase family. In terms of assembly, homodimer.

The catalysed reaction is (S)-4-amino-5-oxopentanoate + tRNA(Glu) + NADP(+) = L-glutamyl-tRNA(Glu) + NADPH + H(+). The protein operates within porphyrin-containing compound metabolism; protoporphyrin-IX biosynthesis; 5-aminolevulinate from L-glutamyl-tRNA(Glu): step 1/2. Catalyzes the NADPH-dependent reduction of glutamyl-tRNA(Glu) to glutamate 1-semialdehyde (GSA). The chain is Glutamyl-tRNA reductase from Frankia casuarinae (strain DSM 45818 / CECT 9043 / HFP020203 / CcI3).